Reading from the N-terminus, the 347-residue chain is ATP-dependent kinase YFH7 (347 aa).

Residue 33 to 41 coordinates ATP; it reads GPPGSGKST.

It belongs to the YFH7 family.

Functionally, ATP-dependent kinase that could be involved in endoplasmic reticulum membrane assembly. In Lachancea thermotolerans (strain ATCC 56472 / CBS 6340 / NRRL Y-8284) (Yeast), this protein is ATP-dependent kinase YFH7 (YFH7).